An 83-amino-acid chain; its full sequence is Antitoxin ChpS (83 aa).

The 46-residue stretch at 3 to 48 folds into the SpoVT-AbrB domain; it reads ITIKRWGNSAGMVIPNIVMKELNLQPGQSVEAQVSNNQLILTPISR.

This sequence belongs to the PemI family. As to quaternary structure, interacts with ChpB, inhibiting its endoribonuclease activity.

Its function is as follows. Antitoxin component of a type II toxin-antitoxin (TA) system. May be involved in the regulation of cell growth. It acts as a suppressor of the endoribonuclease (inhibitory function) of ChpB protein. Both ChpS and ChpB probably bind to the promoter region of the chpS-chpB operon to autoregulate their synthesis. The polypeptide is Antitoxin ChpS (chpS) (Escherichia coli (strain K12)).